The primary structure comprises 349 residues: Putative transport protein YhhT (349 aa).

At 1–10 the chain is on the cytoplasmic side; it reads METPQPDKTG. The chain crosses the membrane as a helical span at residues 11-31; the sequence is MHILLKLASLVVILAGIHAAA. Residue D32 is a topological domain, periplasmic. The helical transmembrane segment at 33 to 53 threads the bilayer; that stretch reads IIVQLLLALFFAIVLNPLVTW. Over 54-62 the chain is Cytoplasmic; it reads FIRRGVQRP. A helical membrane pass occupies residues 63–83; sequence VAITIVVVVMLIALTALVGVL. Residues 84–142 lie on the Periplasmic side of the membrane; that stretch reads AASFNEFISMLPKFNKELTRKLFKLQEMLPFLNLHMSPERMLQRMDSEKVVTFTTALMT. A helical membrane pass occupies residues 143–163; it reads GLSGAMASVLLLVMTVVFMLF. Topologically, residues 164-208 are cytoplasmic; sequence EVRHVPYKMRFALNNPQIHIAGLHRALKGVSHYLALKTLLSLWTG. The chain crosses the membrane as a helical span at residues 209–229; it reads VIVWLGLELMGVQFALMWAVL. Topologically, residues 230–234 are periplasmic; the sequence is AFLLN. Residues 235 to 255 form a helical membrane-spanning segment; the sequence is YVPNIGAVISAVPPMIQVLLF. Residues 256 to 257 are Cytoplasmic-facing; it reads NG. A helical transmembrane segment spans residues 258–278; the sequence is VYECILVGALFLVVHMVIGNI. The Periplasmic segment spans residues 279–292; it reads LEPRMMGHRLGMST. A helical transmembrane segment spans residues 293–313; it reads MVVFLSLLIWGWLLGPVGMLL. The Cytoplasmic segment spans residues 314–349; it reads SVPLTSVCKIWMETTKGGSKLAILLGPGRPKSRLPG.

The protein belongs to the autoinducer-2 exporter (AI-2E) (TC 2.A.86) family.

The protein resides in the cell inner membrane. This chain is Putative transport protein YhhT (yhhT), found in Escherichia coli O157:H7.